We begin with the raw amino-acid sequence, 405 residues long: Arginine biosynthesis bifunctional protein ArgJ (405 aa).

Residues T152, K178, T189, E276, N400, and T405 each contribute to the substrate site. T189 (nucleophile) is an active-site residue.

It belongs to the ArgJ family. Heterotetramer of two alpha and two beta chains.

It localises to the cytoplasm. The catalysed reaction is N(2)-acetyl-L-ornithine + L-glutamate = N-acetyl-L-glutamate + L-ornithine. It catalyses the reaction L-glutamate + acetyl-CoA = N-acetyl-L-glutamate + CoA + H(+). Its pathway is amino-acid biosynthesis; L-arginine biosynthesis; L-ornithine and N-acetyl-L-glutamate from L-glutamate and N(2)-acetyl-L-ornithine (cyclic): step 1/1. It functions in the pathway amino-acid biosynthesis; L-arginine biosynthesis; N(2)-acetyl-L-ornithine from L-glutamate: step 1/4. Catalyzes two activities which are involved in the cyclic version of arginine biosynthesis: the synthesis of N-acetylglutamate from glutamate and acetyl-CoA as the acetyl donor, and of ornithine by transacetylation between N(2)-acetylornithine and glutamate. This is Arginine biosynthesis bifunctional protein ArgJ from Pseudomonas syringae pv. tomato (strain ATCC BAA-871 / DC3000).